A 767-amino-acid polypeptide reads, in one-letter code: Protein SQS1 (767 aa).

Over residues 1–17 the composition is skewed to basic residues; it reads MAKRHSHYQGSRRRHAR. A disordered region spans residues 1-60; it reads MAKRHSHYQGSRRRHARGSNSKKAGRGNAKGIQGRKIKKKPTPTNSWHNSSIPLGEGDLD. Residues 42–52 are compositionally biased toward polar residues; that stretch reads TPTNSWHNSSI. Serine 105 carries the post-translational modification Phosphoserine. Acidic residues predominate over residues 176 to 185; it reads EDSENEDDDS. Residues 176–200 form a disordered region; sequence EDSENEDDDSQNSPSTDHSLSSNES. 5 positions are modified to phosphoserine: serine 217, serine 255, serine 334, serine 343, and serine 345. Residues 466–493 form a disordered region; that stretch reads YSDIPISDSSDEGDSYEGDSYEDDEDMA. A compositionally biased stretch (acidic residues) spans 474–492; the sequence is SSDEGDSYEGDSYEDDEDM. An R3H domain is found at 594-656; it reads GLHIQNIKDE…HTSVVVEKIK (63 aa). The region spanning 720-767 is the G-patch domain; that stretch reads NENIGRRMLEKLGWKSGEGLGIQGNKGISEPIFAKIKKNRSGLRHSES.

This sequence belongs to the SQS1 family.

Its subcellular location is the cytoplasm. The protein localises to the nucleus. Functionally, may be involved in splicing since overexpression antagonizes the suppression of splicing defects by SPP382 mutants. The protein is Protein SQS1 (SQS1) of Saccharomyces cerevisiae (strain YJM789) (Baker's yeast).